A 385-amino-acid chain; its full sequence is Glutamate 5-kinase (385 aa).

Position 17 (K17) interacts with ATP. Substrate is bound by residues S64, D151, and N165. 185-186 is an ATP binding site; the sequence is SD. Residues 291–367 enclose the PUA domain; sequence SGTVRVDAGA…NQIDNILGYN (77 aa).

Belongs to the glutamate 5-kinase family.

Its subcellular location is the cytoplasm. The enzyme catalyses L-glutamate + ATP = L-glutamyl 5-phosphate + ADP. It functions in the pathway amino-acid biosynthesis; L-proline biosynthesis; L-glutamate 5-semialdehyde from L-glutamate: step 1/2. Catalyzes the transfer of a phosphate group to glutamate to form L-glutamate 5-phosphate. This Methanosarcina acetivorans (strain ATCC 35395 / DSM 2834 / JCM 12185 / C2A) protein is Glutamate 5-kinase.